The sequence spans 290 residues: Festuclavine dehydrogenase easG (290 aa).

Belongs to the fgaFS/easG family.

It carries out the reaction festuclavine + NAD(+) = 6,8-dimethyl-6,7-didehydroergoline + NADH + H(+). It participates in alkaloid biosynthesis; ergot alkaloid biosynthesis. Functionally, festuclavine dehydrogenase; part of the gene cluster that mediates the biosynthesis of fumiclavanine C, a fungal ergot alkaloid. DmaW catalyzes the first step of ergot alkaloid biosynthesis by condensing dimethylallyl diphosphate (DMAP) and tryptophan to form 4-dimethylallyl-L-tryptophan. The second step is catalyzed by the methyltransferase easF that methylates 4-dimethylallyl-L-tryptophan in the presence of S-adenosyl-L-methionine, resulting in the formation of 4-dimethylallyl-L-abrine. The catalase easC and the FAD-dependent oxidoreductase easE then transform 4-dimethylallyl-L-abrine to chanoclavine-I which is further oxidized by EasD in the presence of NAD(+), resulting in the formation of chanoclavine-I aldehyde. EasA reduces chanoclavine-I aldehyde to dihydrochanoclavine-I aldehyde that spontaneously dehydrates to form 6,8-dimethyl-6,7-didehydroergoline. EasG then catalyzes the reduction of 6,8-dimethyl-6,7-didehydroergoline to form festuclavine. Hydrolysis of festuclavine by easM then leads to the formation of fumigaclavine B which is in turn acetylated by easN to fumigaclavine A. Finally, easL catalyzes the conversion of fumigaclavine A into fumigaclavine C by attaching a dimethylallyl moiety to C-2 of the indole nucleus. This is Festuclavine dehydrogenase easG from Aspergillus fumigatus (strain ATCC MYA-4609 / CBS 101355 / FGSC A1100 / Af293) (Neosartorya fumigata).